The chain runs to 332 residues: D-2-hydroxyacid dehydrogenase (NAD(+)) (332 aa).

Catalysis depends on residues Arg237 and Glu266. His298 (proton donor) is an active-site residue.

The protein belongs to the D-isomer specific 2-hydroxyacid dehydrogenase family. As to quaternary structure, monomer.

It catalyses the reaction a (2R)-2-hydroxycarboxylate + NAD(+) = a 2-oxocarboxylate + NADH + H(+). The catalysed reaction is (2R)-hydroxy-4-methylpentanoate + NAD(+) = 4-methyl-2-oxopentanoate + NADH + H(+). It functions in the pathway amino-acid degradation; L-leucine degradation. Functionally, involved in the reductive branch of L-leucine fermentation. Catalyzes the NADH-dependent reduction of 4-methyl-2-oxopentanoate (2-oxoisocaproate) to (R)-2-hydroxy-4-methylpentanoate ((R)-2-hydroxyisocaproate). For the reverse reaction, the enzyme accepts (R)- but not (S)-2-hydroxy-4-methylpentanoate. Can also use 2-oxopentanoate, 2-oxohexanoate and phenylpyruvate but not 2-oxoisovalerate and 2-oxobutyrate. Cannot use NADPH. This is D-2-hydroxyacid dehydrogenase (NAD(+)) from Clostridioides difficile (Peptoclostridium difficile).